Reading from the N-terminus, the 242-residue chain is UPF0246 protein SPH_1662 (242 aa).

Belongs to the UPF0246 family.

This chain is UPF0246 protein SPH_1662, found in Streptococcus pneumoniae (strain Hungary19A-6).